A 681-amino-acid polypeptide reads, in one-letter code: Mitosis inhibitor nif1 (681 aa).

Positions 22–43 are disordered; the sequence is LNKKDGNDDDKAEHSKRSGYHG. The segment covering 23–37 has biased composition (basic and acidic residues); sequence NKKDGNDDDKAEHSK. Ser-70 is subject to Phosphoserine. 2 disordered regions span residues 80–104 and 182–324; these read TTSGSSSDLLNIESPASPAEASSPF and YYHE…SSRQ. The segment covering 92–103 has biased composition (low complexity); the sequence is ESPASPAEASSP. Positions 191-203 are enriched in polar residues; the sequence is TASNTSPTPNSIK. Phosphoserine is present on Ser-196. Residues 238-278 show a composition bias toward low complexity; that stretch reads SSGDSTPLSGSSSSKGMLMSMSTSENHSLSSNPELSNSNLL. Residues 296 to 306 are compositionally biased toward basic and acidic residues; that stretch reads SSKEPDKEHST. 2 Sel1-like repeats span residues 547–582 and 583–618; these read ALILYELGVCFMHGWGITRDRYLALHLIKLSGAWGD and ADAQFEAGLQMSLGAVSDKDSHMAAYYYRLAGFQGI.

The protein localises to the cytoplasm. Its function is as follows. Functions as a negative regulator of mitosis. It interacts with the C-terminal of nim1, thereby inhibiting its kinase activity which phosphorylates wee1. This chain is Mitosis inhibitor nif1 (nif1), found in Schizosaccharomyces pombe (strain 972 / ATCC 24843) (Fission yeast).